A 190-amino-acid chain; its full sequence is Peptidyl-tRNA hydrolase (190 aa).

F14 is a tRNA binding site. The active-site Proton acceptor is the H19. TRNA-binding residues include M64, N66, and N112.

The protein belongs to the PTH family. As to quaternary structure, monomer.

It localises to the cytoplasm. It carries out the reaction an N-acyl-L-alpha-aminoacyl-tRNA + H2O = an N-acyl-L-amino acid + a tRNA + H(+). Functionally, hydrolyzes ribosome-free peptidyl-tRNAs (with 1 or more amino acids incorporated), which drop off the ribosome during protein synthesis, or as a result of ribosome stalling. Catalyzes the release of premature peptidyl moieties from peptidyl-tRNA molecules trapped in stalled 50S ribosomal subunits, and thus maintains levels of free tRNAs and 50S ribosomes. The polypeptide is Peptidyl-tRNA hydrolase (Staphylococcus epidermidis (strain ATCC 35984 / DSM 28319 / BCRC 17069 / CCUG 31568 / BM 3577 / RP62A)).